Reading from the N-terminus, the 376-residue chain is 5-hydroxytryptamine receptor 1D (376 aa).

Positions 1 to 22 (MSPPNQSEEGLPQEASNRSLNA) are disordered. N5, N17, and N21 each carry an N-linked (GlcNAc...) asparagine glycan. A run of 3 helical transmembrane segments spans residues 39-64 (VSLV…TTIL), 76-97 (LIGS…ISIA), and 110-134 (LCDI…VIAL). C111 and C188 are joined by a disulfide. The serotonin site is built by D118 and C122. The short motif at 135–137 (DRY) is the DRY motif; important for ligand-induced conformation changes element. 4 helical membrane-spanning segments follow: residues 155–176 (AGAM…PLFW), 195–218 (ISYT…ILYS), 300–325 (KTLG…VLPI), and 335–358 (ALFD…YTVF). Residue S320 coordinates serotonin. The NPxxY motif; important for ligand-induced conformation changes and signaling motif lies at 351-355 (NPIIY).

This sequence belongs to the G-protein coupled receptor 1 family. As to quaternary structure, homodimer. Heterodimer with HTR1B.

Its subcellular location is the cell membrane. Functionally, G-protein coupled receptor for 5-hydroxytryptamine (serotonin). Also functions as a receptor for ergot alkaloid derivatives, various anxiolytic and antidepressant drugs and other psychoactive substances. Ligand binding causes a conformation change that triggers signaling via guanine nucleotide-binding proteins (G proteins) and modulates the activity of downstream effectors, such as adenylate cyclase. HTR1D is coupled to G(i)/G(o) G alpha proteins and mediates inhibitory neurotransmission by inhibiting adenylate cyclase activity. Regulates the release of 5-hydroxytryptamine in the brain, and thereby affects neural activity. May also play a role in regulating the release of other neurotransmitters. May play a role in vasoconstriction. The protein is 5-hydroxytryptamine receptor 1D (HTR1D) of Cavia porcellus (Guinea pig).